Consider the following 482-residue polypeptide: Pyruvate kinase (482 aa).

Arg37 contacts substrate. Positions 39, 41, and 71 each coordinate K(+). Residue 39-42 (NFSH) participates in ATP binding. 2 residues coordinate ATP: Arg78 and Lys160. Glu222 provides a ligand contact to Mg(2+). Positions 245, 246, and 278 each coordinate substrate. Asp246 contributes to the Mg(2+) binding site.

Belongs to the pyruvate kinase family. As to quaternary structure, homotetramer. The cofactor is Mg(2+). K(+) serves as cofactor.

The catalysed reaction is pyruvate + ATP = phosphoenolpyruvate + ADP + H(+). It functions in the pathway carbohydrate degradation; glycolysis; pyruvate from D-glyceraldehyde 3-phosphate: step 5/5. The sequence is that of Pyruvate kinase (ttuE) from Agrobacterium vitis (Rhizobium vitis).